Reading from the N-terminus, the 352-residue chain is Ion-translocating oxidoreductase complex subunit D (352 aa).

4 consecutive transmembrane segments (helical) span residues 20-40 (IMLL…WFFG), 42-62 (GTLF…AIVL), 69-91 (VASH…SIPP), and 123-143 (PAMI…TSWL). T187 is subject to FMN phosphoryl threonine. 5 consecutive transmembrane segments (helical) span residues 215–235 (LAGV…VFLL), 242–262 (WHIP…GWLF), 267–287 (LASP…FFIL), 301–321 (LIFG…GGYP), and 322–342 (DGVA…DYYT).

It belongs to the NqrB/RnfD family. As to quaternary structure, the complex is composed of six subunits: RsxA, RsxB, RsxC, RsxD, RsxE and RsxG. It depends on FMN as a cofactor.

Its subcellular location is the cell inner membrane. In terms of biological role, part of a membrane-bound complex that couples electron transfer with translocation of ions across the membrane. Required to maintain the reduced state of SoxR. This is Ion-translocating oxidoreductase complex subunit D from Salmonella enteritidis PT4 (strain P125109).